Reading from the N-terminus, the 328-residue chain is MSKKPVRVAVTGAAGQIGYALLFRIASGEMLGKDQPVILQLLEVPVEGPQKALKGVMMELDDCAFPLLAGMEAHSDPMTAFKDADYALLVGSRPRGPGMERAELLAVNGAIFTAQGKALNAVASRNVKVLVVGNPANTNAYIAMKSAPDLPRKNFTAMLRLDHNRAASQIAAKTGKAVADIEKLTVWGNHSPTMYADYRFATINGESVAKMINDQEWNANVFLPTVGKRGAAIIEARGLSSAASAANAAIDHMRDWALGTNGKWVTMGIPSDGQYGIPKDTMFGFPVTCENGEYKLVEGLEIDAFSQERINKTLEELQGEQAGVAHLL.

12–18 provides a ligand contact to NAD(+); sequence GAAGQIG. 2 residues coordinate substrate: arginine 95 and arginine 101. NAD(+) is bound by residues asparagine 108, glutamine 115, and 132–134; that span reads VGN. 2 residues coordinate substrate: asparagine 134 and arginine 165. Catalysis depends on histidine 190, which acts as the Proton acceptor.

The protein belongs to the LDH/MDH superfamily. MDH type 2 family.

It carries out the reaction (S)-malate + NAD(+) = oxaloacetate + NADH + H(+). Functionally, catalyzes the reversible oxidation of malate to oxaloacetate. The protein is Malate dehydrogenase of Polaromonas sp. (strain JS666 / ATCC BAA-500).